The sequence spans 80 residues: Large ribosomal subunit protein bL31B (80 aa).

The protein belongs to the bacterial ribosomal protein bL31 family. Type B subfamily. In terms of assembly, part of the 50S ribosomal subunit.

This chain is Large ribosomal subunit protein bL31B, found in Methylobacillus flagellatus (strain ATCC 51484 / DSM 6875 / VKM B-1610 / KT).